A 105-amino-acid polypeptide reads, in one-letter code: Vacuolar ATPase assembly integral membrane protein VMA21 homolog (105 aa).

The tract at residues 1-26 (MSTKNKKAAGGNGGAPKQTRQQSHDS) is disordered. Residues 1–36 (MSTKNKKAAGGNGGAPKQTRQQSHDSQDYSSFKTVL) lie on the Cytoplasmic side of the membrane. Residues 37-57 (FYCMLIVFLPVLTFFVLKGFV) traverse the membrane as a helical segment. Residues 58-68 (LDQFLDISEVK) are Lumenal-facing. The helical transmembrane segment at 69–89 (VNIASAVGAVVALHVALGLYI) threads the bilayer. The Cytoplasmic segment spans residues 90-105 (YRAYFGAPGSKASKTD).

This sequence belongs to the VMA21 family.

Its subcellular location is the endoplasmic reticulum membrane. It is found in the endoplasmic reticulum-Golgi intermediate compartment membrane. The protein localises to the cytoplasmic vesicle. It localises to the COPII-coated vesicle membrane. Functionally, required for the assembly of the V0 complex of the vacuolar ATPase (V-ATPase) in the endoplasmic reticulum. The sequence is that of Vacuolar ATPase assembly integral membrane protein VMA21 homolog from Drosophila yakuba (Fruit fly).